Reading from the N-terminus, the 463-residue chain is Chromosomal replication initiator protein DnaA (463 aa).

The segment at 1 to 83 (MSTNQIILTD…LQLFQHYNNT (83 aa)) is domain I, interacts with DnaA modulators. Residues 83–124 (TIKSIEIITKELPGTTQTVTELPTKTFADIGSSELNSENIFS) are domain II. The domain III, AAA+ region stretch occupies residues 125–343 (TLDVRFTFDN…GALNKVIAHS (219 aa)). Residues Gly171, Gly173, Lys174, and Thr175 each coordinate ATP. The interval 344 to 463 (NFTLKEITLE…IHLLMKILQN (120 aa)) is domain IV, binds dsDNA.

It belongs to the DnaA family. Oligomerizes as a right-handed, spiral filament on DNA at oriC.

Its subcellular location is the cytoplasm. In terms of biological role, plays an essential role in the initiation and regulation of chromosomal replication. ATP-DnaA binds to the origin of replication (oriC) to initiate formation of the DNA replication initiation complex once per cell cycle. Binds the DnaA box (a 9 base pair repeat at the origin) and separates the double-stranded (ds)DNA. Forms a right-handed helical filament on oriC DNA; dsDNA binds to the exterior of the filament while single-stranded (ss)DNA is stabiized in the filament's interior. The ATP-DnaA-oriC complex binds and stabilizes one strand of the AT-rich DNA unwinding element (DUE), permitting loading of DNA polymerase. After initiation quickly degrades to an ADP-DnaA complex that is not apt for DNA replication. Binds acidic phospholipids. The sequence is that of Chromosomal replication initiator protein DnaA from Rickettsia africae (strain ESF-5).